We begin with the raw amino-acid sequence, 411 residues long: MAAEAGGGEPLVKFVKLSGRAAGSKKKVRWFPVRRLFTHSCPSLRIPSRFLREGRRSPPARSGHRCVADNTNLYVFGGYNPDYDESGGPENEDYPLFRELWRYHFATGMWHQMGTDGHMPRELASMSLVLHGHNLLVFGGTGIPFGESNGNDVYVCNVRYKRWSKLNCRGKKPNRIYGQAMAIIHGFLYVFGGTTGYIYSTDLHRLDLSTREWIQLRPNNPPCDLPEERYRHEIAHDGQRIYVLGGGTSWTAYSLEKIHAYNFETNTWEDIPTKPHGNLGFPAARRCHSCVQIKNEVFICGGYNGLVILGDLWKLNLQTFQWTKLPALMPEPAYFHCAAVTPAGCMYIHGGVVNIQQNKRTGSLFKIWLTVPSLLELCWENLLKYFPQLCQLPTHQLLQLGLSQELIERLK.

Kelch repeat units lie at residues 72 to 133, 135 to 186, 187 to 239, 240 to 288, 296 to 342, and 345 to 388; these read NLYV…LHGH, LLVF…IIHG, FLYV…HDGQ, RIYV…RRCH, EVFI…AVTP, and CMYI…YFPQ.

Belongs to the KLHDC10 family. Component of a CRL2 E3 ubiquitin-protein ligase complex, also named ECS (Elongin BC-CUL2/5-SOCS-box protein) complex, composed of CUL2, Elongin BC (ELOB and ELOC), RBX1 and substrate-specific adapter KLHDC10.

It participates in protein modification; protein ubiquitination. Functionally, substrate-recognition component of a Cul2-RING (CRL2) E3 ubiquitin-protein ligase complex of the DesCEND (destruction via C-end degrons) pathway, which recognizes a C-degron located at the extreme C terminus of target proteins, leading to their ubiquitination and degradation. The C-degron recognized by the DesCEND pathway is usually a motif of less than ten residues and can be present in full-length proteins, truncated proteins or proteolytically cleaved forms. The CRL2(KLHDC10) complex specifically recognizes proteins with a proline-glycine (Pro-Gly) or an alanine tail (CAT tail) at the C-terminus, leading to their ubiquitination and degradation. The CRL2(KLHDC10) complex is involved in the ribosome-associated quality control (RQC) pathway, which mediates the extraction of incompletely synthesized nascent chains from stalled ribosomes: CRL2(KLHDC10) acts downstream of NEMF and recognizes CAT tails associated with stalled nascent chains, leading to their ubiquitination and degradation. This Xenopus laevis (African clawed frog) protein is Kelch domain-containing protein 10.